The primary structure comprises 237 residues: Type III pantothenate kinase (237 aa).

Residue 6–13 (DAGNSRVK) participates in ATP binding. Substrate-binding positions include tyrosine 86 and 93–96 (GADR). The Proton acceptor role is filled by aspartate 95. Position 118 (threonine 118) interacts with ATP. Threonine 168 provides a ligand contact to substrate.

It belongs to the type III pantothenate kinase family. As to quaternary structure, homodimer. The cofactor is NH4(+). It depends on K(+) as a cofactor.

Its subcellular location is the cytoplasm. It catalyses the reaction (R)-pantothenate + ATP = (R)-4'-phosphopantothenate + ADP + H(+). It functions in the pathway cofactor biosynthesis; coenzyme A biosynthesis; CoA from (R)-pantothenate: step 1/5. Its function is as follows. Catalyzes the phosphorylation of pantothenate (Pan), the first step in CoA biosynthesis. The chain is Type III pantothenate kinase from Chromobacterium violaceum (strain ATCC 12472 / DSM 30191 / JCM 1249 / CCUG 213 / NBRC 12614 / NCIMB 9131 / NCTC 9757 / MK).